The following is a 252-amino-acid chain: Transcriptional regulatory protein HptR (252 aa).

Residues 3-118 (KVVICDDERI…QLEVILGRLV (116 aa)) form the Response regulatory domain. The residue at position 55 (Asp55) is a 4-aspartylphosphate. The 98-residue stretch at 153–250 (NQIVDQIKQS…QMSPSDYCKQ (98 aa)) folds into the HTH araC/xylS-type domain. 2 consecutive DNA-binding regions (H-T-H motif) follow at residues 170-191 (SDLIQHIDVSESYAMRTFKDHV) and 217-240 (HYEIADKVGFSEYKMFSYHFKKYL).

Post-translationally, phosphorylated by HptS.

It is found in the cytoplasm. Functionally, member of the two-component regulatory system HptS/HptR that regulates genes involved in hexose phosphate transport system in response to changes in extracellular phosphate sources. Activates uhpT expression to facilitate glucose-6-phosphate/G6P utilization by directly binding to its promoter. Antagonizes CcpA-dependent transcription of a subset of CcpA-regulated genes involved in antibiotic susceptibility. The sequence is that of Transcriptional regulatory protein HptR (hptR) from Staphylococcus aureus (strain Mu50 / ATCC 700699).